Here is a 184-residue protein sequence, read N- to C-terminus: MSRIGKLPVTLPEKVELSVSPSNLVTVKGPKGTLTQQVDVDIKVSVEDGKVVVARPTEQKRHKALHGLYRSLISNMVQGVSQGYKVELELVGVGYKATATNNILELSLGYSHGIFLKLPSEISASALTEKGKNPIVTLECIDKQLIGQVSAKIRSLRKIEPYKGKGVRFKGEVVRRKAGKTASK.

It belongs to the universal ribosomal protein uL6 family. Part of the 50S ribosomal subunit.

In terms of biological role, this protein binds to the 23S rRNA, and is important in its secondary structure. It is located near the subunit interface in the base of the L7/L12 stalk, and near the tRNA binding site of the peptidyltransferase center. The protein is Large ribosomal subunit protein uL6 of Cytophaga hutchinsonii (strain ATCC 33406 / DSM 1761 / CIP 103989 / NBRC 15051 / NCIMB 9469 / D465).